The chain runs to 218 residues: N-(5'-phosphoribosyl)anthranilate isomerase (218 aa).

It belongs to the TrpF family.

It catalyses the reaction N-(5-phospho-beta-D-ribosyl)anthranilate = 1-(2-carboxyphenylamino)-1-deoxy-D-ribulose 5-phosphate. It participates in amino-acid biosynthesis; L-tryptophan biosynthesis; L-tryptophan from chorismate: step 3/5. The polypeptide is N-(5'-phosphoribosyl)anthranilate isomerase (Bacillus licheniformis (strain ATCC 14580 / DSM 13 / JCM 2505 / CCUG 7422 / NBRC 12200 / NCIMB 9375 / NCTC 10341 / NRRL NRS-1264 / Gibson 46)).